Here is a 91-residue protein sequence, read N- to C-terminus: uncharacterized protein (91 aa).

Helical transmembrane passes span 5–27 (FFKY…TNFQ) and 47–69 (DFYH…FIFF).

The protein localises to the cell membrane. This is an uncharacterized protein from Archaeoglobus fulgidus (strain ATCC 49558 / DSM 4304 / JCM 9628 / NBRC 100126 / VC-16).